The sequence spans 276 residues: Large ribosomal subunit protein uL2 (276 aa).

The disordered stretch occupies residues 225-276 (VMNPVDHPHGGGEGKTAAGRDPVSPWGTPTKGYRTRSNKRTDSMIVQKRHKR).

It belongs to the universal ribosomal protein uL2 family. In terms of assembly, part of the 50S ribosomal subunit. Forms a bridge to the 30S subunit in the 70S ribosome.

Functionally, one of the primary rRNA binding proteins. Required for association of the 30S and 50S subunits to form the 70S ribosome, for tRNA binding and peptide bond formation. It has been suggested to have peptidyltransferase activity; this is somewhat controversial. Makes several contacts with the 16S rRNA in the 70S ribosome. The chain is Large ribosomal subunit protein uL2 from Cupriavidus taiwanensis (strain DSM 17343 / BCRC 17206 / CCUG 44338 / CIP 107171 / LMG 19424 / R1) (Ralstonia taiwanensis (strain LMG 19424)).